Here is a 217-residue protein sequence, read N- to C-terminus: Uracil-DNA glycosylase (217 aa).

D62 serves as the catalytic Proton acceptor.

Belongs to the uracil-DNA glycosylase (UDG) superfamily. UNG family.

Its subcellular location is the cytoplasm. The catalysed reaction is Hydrolyzes single-stranded DNA or mismatched double-stranded DNA and polynucleotides, releasing free uracil.. Excises uracil residues from the DNA which can arise as a result of misincorporation of dUMP residues by DNA polymerase or due to deamination of cytosine. The polypeptide is Uracil-DNA glycosylase (Streptococcus thermophilus (strain ATCC BAA-491 / LMD-9)).